The following is a 316-amino-acid chain: RNA interference defective protein 11 (316 aa).

An RING-type; degenerate zinc finger spans residues 183-218 (CYINFNCQTSKVMFGCGHVYCEQCLNSWNDKPCSVC).

As to quaternary structure, interacts (via RING-type zinc finger domain) with rde-10.

Functionally, in complex with rde-10, required in the endogenous and exogenous siRNA pathway for biogenesis and accumulation of secondary small interfering RNA (siRNA) intermediates, such as 22G-siRNAs derived from ergo-1 targets. The protein is RNA interference defective protein 11 of Caenorhabditis elegans.